Reading from the N-terminus, the 295-residue chain is Protoheme IX farnesyltransferase (295 aa).

The next 9 helical transmembrane spans lie at 27-47 (LVVFTAIAGMVAAPGSIHPFL), 48-68 (ALISLMCIALGSGSAGAINMW), 94-114 (SALEFGITIGILSVFIMAIAV), 117-137 (ISAALLAVSILFYVFVYTIWL), 144-164 (NIVIGGAAGAFPPMIGWAVVT), 171-191 (SFILFLIIFMWTPPHFWALSL), 216-236 (KHILIYSILLVLTSLLPALFL), 241-261 (FYLSMAIIEGCVFIWFAISVI), and 272-292 (MFSYSISYLFSLFASIIFCSI).

The protein belongs to the UbiA prenyltransferase family. Protoheme IX farnesyltransferase subfamily.

It is found in the cell membrane. It carries out the reaction heme b + (2E,6E)-farnesyl diphosphate + H2O = Fe(II)-heme o + diphosphate. It participates in porphyrin-containing compound metabolism; heme O biosynthesis; heme O from protoheme: step 1/1. Its function is as follows. Converts heme B (protoheme IX) to heme O by substitution of the vinyl group on carbon 2 of heme B porphyrin ring with a hydroxyethyl farnesyl side group. The polypeptide is Protoheme IX farnesyltransferase (Wolbachia pipientis subsp. Culex pipiens (strain wPip)).